Reading from the N-terminus, the 64-residue chain is Large ribosomal subunit protein bL28 (64 aa).

This sequence belongs to the bacterial ribosomal protein bL28 family.

The sequence is that of Large ribosomal subunit protein bL28 from Elusimicrobium minutum (strain Pei191).